A 110-amino-acid polypeptide reads, in one-letter code: Ribonuclease P protein component 4 (110 aa).

Residues C65, C68, C94, and C97 each coordinate Zn(2+).

Belongs to the eukaryotic/archaeal RNase P protein component 4 family. In terms of assembly, consists of a catalytic RNA component and at least 5 protein subunits. Zn(2+) is required as a cofactor.

Its subcellular location is the cytoplasm. The catalysed reaction is Endonucleolytic cleavage of RNA, removing 5'-extranucleotides from tRNA precursor.. Part of ribonuclease P, a protein complex that generates mature tRNA molecules by cleaving their 5'-ends. The polypeptide is Ribonuclease P protein component 4 (Methanococcus maripaludis (strain DSM 14266 / JCM 13030 / NBRC 101832 / S2 / LL)).